A 1306-amino-acid polypeptide reads, in one-letter code: Angiotensin-converting enzyme (1306 aa).

Residues 1 to 28 (MGAASGRRSPPLLLPLLLLLLPPPPVIL) form the signal peptide. Residues 29–1256 (ELDPALQPGN…GLNLEEQQAR (1228 aa)) lie on the Extracellular side of the membrane. 2 Peptidase M2 domains span residues 40-624 (PADE…LGWP) and 643-1222 (VSDE…LGWP). Residues N54, N74, N111, N146, and N160 are each glycosylated (N-linked (GlcNAc...) asparagine). C157 and C165 are disulfide-bonded. Y231 serves as a coordination point for chloride. N-linked (GlcNAc...) asparagine glycosylation occurs at N318. Cysteines 359 and 377 form a disulfide. H390 is a binding site for Zn(2+). The active-site Proton acceptor 1 is the E391. 2 residues coordinate Zn(2+): H394 and E418. N-linked (GlcNAc...) asparagine glycans are attached at residues N445 and N509. The active-site Proton donor 1 is H520. The N-linked (GlcNAc...) asparagine glycan is linked to N523. Residue R529 participates in chloride binding. An intrachain disulfide couples C545 to C557. 4 N-linked (GlcNAc...) asparagine glycosylation sites follow: N673, N695, N714, and N760. C757 and C763 are oxidised to a cystine. Residues R791 and Y829 each coordinate chloride. N942 carries N-linked (GlcNAc...) asparagine glycosylation. A disulfide bridge links C957 with C975. A Zn(2+)-binding site is contributed by H988. Catalysis depends on E989, which acts as the Proton acceptor 2. H992 and E1016 together coordinate Zn(2+). The chloride site is built by W1090 and R1094. Residue H1118 is the Proton donor 2 of the active site. R1127 contributes to the chloride binding site. C1143 and C1155 are oxidised to a cystine. N-linked (GlcNAc...) asparagine glycosylation is found at N1191 and N1225. A juxtamembrane stalk region spans residues 1215-1256 (HGEKLGWPQYNWTPNSARLEGPFVGSGRVNFLGLNLEEQQAR). The chain crosses the membrane as a helical span at residues 1257-1277 (VGQWVLLFLGVALLVATLGLT). Over 1278–1306 (QRLFSIRHHSLRRPHRGPQFGSEVELRHS) the chain is Cytoplasmic. Position 1299 is a phosphoserine (S1299).

It belongs to the peptidase M2 family. Monomer and homodimer; homodimerizes following binding to an inhibitor. Interacts with calmodulin (CALM1, CALM2 or CALM3); interaction takes place in the cytoplasmic region and regulates phosphorylation and proteolytic cleavage. Zn(2+) serves as cofactor. The cofactor is chloride. Produced following proteolytic cleavage by secretase enzymes that cleave the transmembrane form in the juxtamembrane stalk region upstream of the transmembrane region. Cleavage can take place at different sites of the juxtamembrane stalk region. In terms of processing, phosphorylated by CK2 on Ser-1299; which allows membrane retention. Phosphorylated on tyrosine residues on its extracellular part, promoting cleavage by secretase enzymes and formation of the soluble form (Angiotensin-converting enzyme, soluble form).

Its subcellular location is the cell membrane. It is found in the cytoplasm. The protein localises to the secreted. The enzyme catalyses Release of a C-terminal dipeptide, oligopeptide-|-Xaa-Yaa, when Xaa is not Pro, and Yaa is neither Asp nor Glu. Thus, conversion of angiotensin I to angiotensin II, with increase in vasoconstrictor activity, but no action on angiotensin II.. It carries out the reaction angiotensin I + H2O = L-histidyl-L-leucine + angiotensin II. It catalyses the reaction bradykinin + H2O = L-Phe-L-Arg + bradykinin(1-7). The catalysed reaction is substance P + H2O = substance P(1-9) + L-Leu-L-Met-NH2. The enzyme catalyses substance P + H2O = substance P(1-8) + Gly-L-Leu-L-Met-NH2. It carries out the reaction substance P + H2O = L-Phe-L-Phe-Gly-L-Leu-L-Met-NH2 + substance P(1-6). It catalyses the reaction neurotensin + H2O = neurotensin(1-11) + L-isoleucyl-L-leucine. The catalysed reaction is goralatide + H2O = N-acetyl-L-seryl-L-aspartate + L-lysyl-L-proline. The enzyme catalyses Met-enkephalin + H2O = L-phenylalanyl-L-methionine + L-tyrosylglycylglycine. It carries out the reaction Leu-enkephalin + H2O = L-tyrosylglycylglycine + L-phenylalanyl-L-leucine. It catalyses the reaction Met-enkephalin-Arg-Phe + H2O = L-arginyl-L-phenylalanine + Met-enkephalin. The dipeptidyl carboxypeptidase activity is strongly activated by chloride. The dipeptidyl carboxypeptidase activity is specifically inhibited by lisinopril, captopril and enalaprilat. Dipeptidyl carboxypeptidase that removes dipeptides from the C-terminus of a variety of circulating hormones, such as angiotensin I, bradykinin or enkephalins, thereby playing a key role in the regulation of blood pressure, electrolyte homeostasis or synaptic plasticity. Composed of two similar catalytic domains, each possessing a functional active site, with different selectivity for substrates. Plays a major role in the angiotensin-renin system that regulates blood pressure and sodium retention by the kidney by converting angiotensin I to angiotensin II, resulting in an increase of the vasoconstrictor activity of angiotensin. Also able to inactivate bradykinin, a potent vasodilator, and therefore enhance the blood pressure response. Acts as a regulator of synaptic transmission by mediating cleavage of neuropeptide hormones, such as substance P, neurotensin or enkephalins. Catalyzes degradation of different enkephalin neuropeptides (Met-enkephalin, Leu-enkephalin, Met-enkephalin-Arg-Phe and possibly Met-enkephalin-Arg-Gly-Leu). Acts as a regulator of synaptic plasticity in the nucleus accumbens of the brain by mediating cleavage of Met-enkephalin-Arg-Phe, a strong ligand of Mu-type opioid receptor OPRM1, into Met-enkephalin. Met-enkephalin-Arg-Phe cleavage by ACE decreases activation of OPRM1, leading to long-term synaptic potentiation of glutamate release. Also acts as a regulator of hematopoietic stem cell differentiation by mediating degradation of hemoregulatory peptide N-acetyl-SDKP (AcSDKP). Acts as a regulator of cannabinoid signaling pathway by mediating degradation of hemopressin, an antagonist peptide of the cannabinoid receptor CNR1. Involved in amyloid-beta metabolism by catalyzing degradation of Amyloid-beta protein 40 and Amyloid-beta protein 42 peptides, thereby preventing plaque formation. Catalyzes cleavage of cholecystokinin (maturation of Cholecystokinin-8 and Cholecystokinin-5) and Gonadoliberin-1 (both maturation and degradation) hormones. Degradation of hemoregulatory peptide N-acetyl-SDKP (AcSDKP) and amyloid-beta proteins is mediated by the N-terminal catalytic domain, while angiotensin I and cholecystokinin cleavage is mediated by the C-terminal catalytic region. Its function is as follows. Soluble form that is released in blood plasma and other body fluids following proteolytic cleavage in the juxtamembrane stalk region. The protein is Angiotensin-converting enzyme of Bos taurus (Bovine).